Reading from the N-terminus, the 183-residue chain is RNA pyrophosphohydrolase (183 aa).

Residues 6–149 (GYRPNVGIIL…KREVYRLALE (144 aa)) form the Nudix hydrolase domain. A Nudix box motif is present at residues 38-59 (GGINAGETPEQAMFRELEEEVG).

The protein belongs to the Nudix hydrolase family. RppH subfamily. Requires a divalent metal cation as cofactor.

Accelerates the degradation of transcripts by removing pyrophosphate from the 5'-end of triphosphorylated RNA, leading to a more labile monophosphorylated state that can stimulate subsequent ribonuclease cleavage. This Thiobacillus denitrificans (strain ATCC 25259 / T1) protein is RNA pyrophosphohydrolase.